The chain runs to 896 residues: Translation initiation factor IF-2 (896 aa).

The interval 49-310 (LKKEHGDTSG…MQQGFDKSAT (262 aa)) is disordered. Positions 57 to 66 (SGETEPTRLT) are enriched in polar residues. 3 stretches are compositionally biased toward basic and acidic residues: residues 101–174 (STIE…KDMN), 184–240 (AKKE…KSAD), and 250–263 (REAE…DEKA). Positions 284–295 (RNQRGRGGKGKL) are enriched in basic residues. One can recognise a tr-type G domain in the interval 395–564 (GRAPVVTIMG…LLQSEVLELT (170 aa)). Positions 404–411 (GHVDHGKT) are G1. 404–411 (GHVDHGKT) is a GTP binding site. Positions 429–433 (GITQH) are G2. Positions 450–453 (DTPG) are G3. Residues 450–454 (DTPGH) and 504–507 (NKID) each bind GTP. The G4 stretch occupies residues 504-507 (NKID). The G5 stretch occupies residues 540 to 542 (SAK).

It belongs to the TRAFAC class translation factor GTPase superfamily. Classic translation factor GTPase family. IF-2 subfamily.

The protein localises to the cytoplasm. One of the essential components for the initiation of protein synthesis. Protects formylmethionyl-tRNA from spontaneous hydrolysis and promotes its binding to the 30S ribosomal subunits. Also involved in the hydrolysis of GTP during the formation of the 70S ribosomal complex. The sequence is that of Translation initiation factor IF-2 from Vibrio atlanticus (strain LGP32) (Vibrio splendidus (strain Mel32)).